The following is a 1177-amino-acid chain: Lysylphosphatidylglycerol biosynthesis bifunctional protein LysX (1177 aa).

Disordered regions lie at residues 1–40 (MRRA…AKFV) and 61–85 (VTLA…PANR). Residues 1-676 (MRRAGRSRQF…LLHHDGSAPD (676 aa)) form a phosphatidylglycerol lysyltransferase region. The segment covering 8–21 (RQFSSVEEAFSTSA) has biased composition (polar residues). Residues 65–82 (SPGSRSGSGPRSGPRLGP) show a composition bias toward low complexity. The next 6 membrane-spanning stretches (helical) occupy residues 93–113 (VPAA…LGSV), 135–155 (FPDT…ALTA), 159–179 (IAWL…VADI), 189–209 (IFGE…LVLA), 227–247 (AVLV…VELF), and 281–301 (VFLN…ATIV). The interval 673-693 (SAPDVSGLRPERTDAEEARSR) is disordered. A lysine--tRNA ligase region spans residues 677-1177 (VSGLRPERTD…TLPFPLAKPH (501 aa)). Residues 681-693 (RPERTDAEEARSR) are compositionally biased toward basic and acidic residues. Mg(2+)-binding residues include Asp-1089 and Glu-1096.

It in the N-terminal section; belongs to the LPG synthetase family. The protein in the C-terminal section; belongs to the class-II aminoacyl-tRNA synthetase family. The cofactor is Mg(2+).

It is found in the cell membrane. The catalysed reaction is tRNA(Lys) + L-lysine + ATP = L-lysyl-tRNA(Lys) + AMP + diphosphate. The enzyme catalyses L-lysyl-tRNA(Lys) + a 1,2-diacyl-sn-glycero-3-phospho-(1'-sn-glycerol) = a 1,2-diacyl-sn-glycero-3-phospho-1'-(3'-O-L-lysyl)-sn-glycerol + tRNA(Lys). Catalyzes the production of L-lysyl-tRNA(Lys)transfer and the transfer of a lysyl group from L-lysyl-tRNA(Lys) to membrane-bound phosphatidylglycerol (PG), which produces lysylphosphatidylglycerol (LPG), one of the components of the bacterial membrane with a positive net charge. LPG synthesis contributes to the resistance to cationic antimicrobial peptides (CAMPs) and likely protects M.tuberculosis against the CAMPs produced by competiting microorganisms (bacteriocins). In fact, the modification of anionic phosphatidylglycerol with positively charged L-lysine results in repulsion of the peptides. This chain is Lysylphosphatidylglycerol biosynthesis bifunctional protein LysX (lysX), found in Mycobacterium avium (strain 104).